We begin with the raw amino-acid sequence, 238 residues long: Ribosomal RNA small subunit methyltransferase G (238 aa).

S-adenosyl-L-methionine contacts are provided by residues Gly77, Phe82, 128–129 (AE), and Arg147.

Belongs to the methyltransferase superfamily. RNA methyltransferase RsmG family.

It localises to the cytoplasm. Specifically methylates the N7 position of guanine in position 535 of 16S rRNA. This chain is Ribosomal RNA small subunit methyltransferase G, found in Listeria innocua serovar 6a (strain ATCC BAA-680 / CLIP 11262).